An 85-amino-acid polypeptide reads, in one-letter code: UPF0298 protein SUB0431 (85 aa).

It belongs to the UPF0298 family.

The protein resides in the cytoplasm. In Streptococcus uberis (strain ATCC BAA-854 / 0140J), this protein is UPF0298 protein SUB0431.